Reading from the N-terminus, the 379-residue chain is Anhydro-N-acetylmuramic acid kinase (379 aa).

Position 9–16 (9–16 (GTSADGVD)) interacts with ATP.

Belongs to the anhydro-N-acetylmuramic acid kinase family.

It catalyses the reaction 1,6-anhydro-N-acetyl-beta-muramate + ATP + H2O = N-acetyl-D-muramate 6-phosphate + ADP + H(+). It functions in the pathway amino-sugar metabolism; 1,6-anhydro-N-acetylmuramate degradation. It participates in cell wall biogenesis; peptidoglycan recycling. Its function is as follows. Catalyzes the specific phosphorylation of 1,6-anhydro-N-acetylmuramic acid (anhMurNAc) with the simultaneous cleavage of the 1,6-anhydro ring, generating MurNAc-6-P. Is required for the utilization of anhMurNAc either imported from the medium or derived from its own cell wall murein, and thus plays a role in cell wall recycling. The chain is Anhydro-N-acetylmuramic acid kinase from Prochlorococcus marinus (strain MIT 9211).